A 366-amino-acid chain; its full sequence is Adenosine deaminase (366 aa).

Residues histidine 19 and histidine 21 each contribute to the Zn(2+) site. Positions 21, 23, and 181 each coordinate substrate. Residue histidine 208 coordinates Zn(2+). The active-site Proton donor is glutamate 211. Residue aspartate 304 coordinates Zn(2+).

Belongs to the metallo-dependent hydrolases superfamily. Adenosine and AMP deaminases family. Adenosine deaminase subfamily. Requires Zn(2+) as cofactor.

The enzyme catalyses adenosine + H2O + H(+) = inosine + NH4(+). It catalyses the reaction 2'-deoxyadenosine + H2O + H(+) = 2'-deoxyinosine + NH4(+). Functionally, catalyzes the hydrolytic deamination of adenosine and 2-deoxyadenosine. The protein is Adenosine deaminase of Mycobacterium avium (strain 104).